The following is a 692-amino-acid chain: MRTENCLVELGTEELPPKALKSLGEAFATQFEAALSQADLSFDSVSWFAAPRRLAVYVSGLAEGQADKVVEKRGPAVSAAFDADGNPTKAAQGWARGNGIDVADAERLVTDKGEWLLHKAHVPGQSVAELLEGLINQAVSKLPIPKPMRWGNYNTQFIRPVHTLCVLYGSEVVNVSVLGLTSGRVVQGHRFHGEGRFELDHADNYASALEQQYVLADFEARKDKVRQQLEDAAKNLSLKPDYDEELLEEIASLVEWPVVLQAGFDKGFLEVPKEALIYTMKDDQKYVPLLDSDGALSNTFLFVTNIESHDASQVISGNEKVIRPRLADAEFFFNSDKKTTLESRLESLETVLFQKQLGTLKEKSERISALSAFIASQIDANETQAARAGLLAKTDLMSNMVMEFPDVQGVMGKYYALNDGEDAPVAEALYEQYMPRFAGDALPSSGVSASVALADKLDTLVGIFGIGQLPKGDKDPFALRRAAIGVLRIVTELSLPLDLETLVSKAIDVYGNKLTNAETQTQVVDFVLGRFNALLQDQAIAIDVIQAVAARRPTKPSDYLARVHAVDKFKALEEAEALAAANKRVANILAKQNVEVTATVNIDESLLAEDAEKALYVELKAAQKEVEIAVPSQDYTRILTTLATLRNVIDNFFDNVMVMADDEAVKHNRLALLSLLRQLFLTTADISILAKS.

This sequence belongs to the class-II aminoacyl-tRNA synthetase family. In terms of assembly, tetramer of two alpha and two beta subunits.

It is found in the cytoplasm. It carries out the reaction tRNA(Gly) + glycine + ATP = glycyl-tRNA(Gly) + AMP + diphosphate. This chain is Glycine--tRNA ligase beta subunit, found in Alteromonas mediterranea (strain DSM 17117 / CIP 110805 / LMG 28347 / Deep ecotype).